Consider the following 174-residue polypeptide: MMMIMGRKCEDCGNQAKKDCVYMRCRTCCKSKAFHCQTHIKSTWVPAYRRSHHKHQSQPLSTSIPKGVQIHTTPGHFPAELSSLADFRCVKVSSIDDGKEQYAYQTTVNIGGHVFRGILHDQGLHKVMVDHHYNKNSNNHQELLTPSTSSCPLKITSPFTDFMFGTRFSSVLRR.

Residues C9, C12, C20, C25, C29, and C36 each coordinate Zn(2+). Residues 9–36 constitute a DNA-binding region (zn(2)-C6 fungal-type; degenerate); sequence CEDCGNQAKKDCVYMRCRTCCKSKAFHC. The Required for homo- and heterodimerization signature appears at 110–113; it reads IGGH.

This sequence belongs to the SHI protein family.

The protein resides in the nucleus. Functionally, transcription activator that binds DNA on 5'-ACTCTAC-3' and promotes auxin homeostasis-regulating gene expression (e.g. YUC genes), as well as genes affecting stamen development, cell expansion and timing of flowering. Synergistically with other SHI-related proteins, regulates gynoecium, stamen and leaf development in a dose-dependent manner, controlling apical-basal patterning. Promotes style and stigma formation, and influences vascular development during gynoecium development. May also have a role in the formation and/or maintenance of the shoot apical meristem (SAM). This is Protein SHI RELATED SEQUENCE 3 (SRS3) from Arabidopsis thaliana (Mouse-ear cress).